The sequence spans 259 residues: GEM-like protein 1 (259 aa).

Positions 1 to 11 (MSGQENHDHGR) are enriched in basic and acidic residues. Residues 1–79 (MSGQENHDHG…PSPAPRNTMD (79 aa)) are disordered. Residues 13–30 (SSTPAAASEPSKAAAHSS) are compositionally biased toward low complexity. A GRAM domain is found at 138–215 (KVFKQTFDCL…NQLKAVNPST (78 aa)).

Belongs to the GEM family. Interacts with AFH1.

In Arabidopsis thaliana (Mouse-ear cress), this protein is GEM-like protein 1 (FIP1).